A 311-amino-acid polypeptide reads, in one-letter code: MVSRGPDEWLETIKKCQALTENEMKQLCEMVKELLMEESNIQPVQTPVTVCGDIHGQFHDLLELFRTAGGFPDDINYIFLGDYVDRGYYSLETFTLLMCLKVKYPAKITLVRGNHESRQITQVYGFYEECLNKYGSTTVWKYCCQVFDFLTLAAIIDGKILCVHGGLSPEIRMLDQIRVLSRAQEVPHEGGFSDLLWSDPDNVEAWQVSPRGAGWLFGSKVAREFNHVNGLNLIARAHQLVMEGFKYHFPEKDVVTVWSAPNYCYRCGNVASVMKVDEDLEPTFKIFSAVPDDYIRESTANHNNQRAGYFL.

Aspartate 53, histidine 55, aspartate 82, and asparagine 114 together coordinate Mn(2+). Histidine 115 functions as the Proton donor in the catalytic mechanism. Positions 164 and 238 each coordinate Mn(2+).

This sequence belongs to the PPP phosphatase family. PP-6 (PP-V) subfamily. In terms of assembly, inactivated in a complex with phosphatase methylesterase PPE1 (PP2Ai). Interacts with phosphatase 2A activator RRD1, which can reactivate PP2Ai by dissociating the catalytic subunit from the complex. Forms a ternary complex with RRD1-TAP42. It depends on Mn(2+) as a cofactor.

Its subcellular location is the cytoplasm. The enzyme catalyses O-phospho-L-seryl-[protein] + H2O = L-seryl-[protein] + phosphate. It carries out the reaction O-phospho-L-threonyl-[protein] + H2O = L-threonyl-[protein] + phosphate. Functionally, involved in the dephosphorylation of the large subunit of RNA polymerase II. Is required in late G1 for normal G1 cyclin expression, bud initiation and expression of certain genes that are periodically expressed during late G1. Associates with the SAP proteins in a cell cycle-dependent manner. The sequence is that of Serine/threonine-protein phosphatase PP1-1 (SIT4) from Saccharomyces cerevisiae (strain ATCC 204508 / S288c) (Baker's yeast).